Consider the following 444-residue polypeptide: Structure-specific endonuclease subunit SLX1 (444 aa).

The region spanning 23–105 (AFYCCYLLRS…QNTKVSRHAD (83 aa)) is the GIY-YIG domain. The SLX1-type zinc-finger motif lies at 240–295 (CGVCKQRLILQHDIIAVCSHSSCHCAAHLSCLSSHFLKDKDSDSELIPREGTCPAC). Disordered regions lie at residues 323 to 355 (RRRR…DALQ) and 386 to 444 (AHRP…EVIE).

It belongs to the SLX1 family. In terms of assembly, forms a heterodimer with SLX4. A divalent metal cation serves as cofactor.

It localises to the nucleus. Its function is as follows. Catalytic subunit of the SLX1-SLX4 structure-specific endonuclease that resolves DNA secondary structures generated during DNA repair and recombination. Has endonuclease activity towards branched DNA substrates, introducing single-strand cuts in duplex DNA close to junctions with ss-DNA. The chain is Structure-specific endonuclease subunit SLX1 from Paracoccidioides brasiliensis (strain Pb18).